A 617-amino-acid chain; its full sequence is Kelch-like protein diablo (617 aa).

Positions 1–55 are disordered; sequence MGDPLLPGSTGLGSGGTAAATGGTGTTGTGLGSGGTSGTERPPSPARLTHTSEKH. Over residues 10 to 37 the composition is skewed to gly residues; it reads TGLGSGGTAAATGGTGTTGTGLGSGGTS. Residues 73–140 enclose the BTB domain; sequence CDVVLNVGGR…CYTAHIIVEE (68 aa). The 103-residue stretch at 175-277 folds into the BACK domain; sequence CLGIRAFADT…SPKFLVGTVG (103 aa). 6 Kelch repeats span residues 324-370, 372-418, 419-465, 467-512, 514-559, and 560-606; these read VLFA…VLND, LYAV…VLDG, FLYA…VLSG, LYAI…VFNN, IYAV…VVNG, and QLYA…VMRA.

It participates in protein modification; protein ubiquitination. In terms of biological role, probable substrate-specific adapter of an E3 ubiquitin-protein ligase complex which mediates the ubiquitination and subsequent proteasomal degradation of target proteins. May have a role in synapse differentiation and growth. In Drosophila mojavensis (Fruit fly), this protein is Kelch-like protein diablo.